A 298-amino-acid chain; its full sequence is Aclacinomycin methylesterase RdmC (298 aa).

Residues 24 to 277 (PALLLVMGGN…LAEIPGMGHA (254 aa)) enclose the AB hydrolase-1 domain. Catalysis depends on residues serine 102, aspartate 248, and histidine 276.

The protein belongs to the AB hydrolase superfamily. Hydrolase RdmC family. As to quaternary structure, monomer.

The catalysed reaction is aclacinomycin T + H2O = 15-demethylaclacinomycin T + methanol. It functions in the pathway antibiotic biosynthesis; aclacinomycin biosynthesis. Functionally, involved in the biosynthesis of the anthracycline aclacinomycin which is an aromatic polyketide antibiotic that exhibits high cytotoxicity and is widely applied in the chemotherapy of a variety of cancers. Catalyzes the removal of the methoxy group from the C-15 position of aclacinomycin T and A to yield 15-demethoxyaclacinomycin T and A, respectively. In Streptomyces purpurascens, this protein is Aclacinomycin methylesterase RdmC (rdmC).